The primary structure comprises 586 residues: Terminase, large subunit (586 aa).

The tract at residues 1–229 (MSTQSNRNAL…TIIWPALYPR (229 aa)) is ATPase activity. Residues 58–65 (AFRGIGKS) carry the Walker A motif motif. Residues 156–161 (IIIADD) carry the Walker B motif motif. A nuclease activity region spans residues 344-429 (HSYHSCSQNT…ESNFGDGMFG (86 aa)). Asp-364, Glu-420, and Asp-518 together coordinate Mg(2+). Residues 571 to 586 (LYWEDDDVNGDRFINW) are involved in prohead binding.

It belongs to the Teseptimavirus large terminase family. Homopentamer. Interacts with the terminase small subunit; the active complex is probably heterooligomeric. Interacts with the portal protein. Requires Mg(2+) as cofactor.

Functionally, the terminase large subunit acts as an ATP driven molecular motor necessary for viral DNA translocation into empty capsids and as an endonuclease that cuts the viral genome at a unique and precise dsDNA sequence to initiate and to end a packaging reaction. The terminase lies at a unique vertex of the procapsid and is composed of two subunits, a small terminase subunit involved in viral DNA recognition (packaging sequence), and a large terminase subunit possessing endonucleolytic and ATPase activities. Both terminase subunits heterooligomerize and are docked on the portal protein to form the packaging machine. The terminase large subunit exhibits endonuclease activity and cleaves the viral genome concatemer. Once the DNA is packaged, the terminase detaches from the connector and gets replaced by the tail to finish maturation of the virion. The polypeptide is Terminase, large subunit (19) (Escherichia coli (Bacteriophage T3)).